A 236-amino-acid chain; its full sequence is Phycobilisome rod-core linker polypeptide cpcG (236 aa).

Positions 11 to 193 constitute a PBS-linker domain; the sequence is STQNQRVNGF…LDYNFLYKKN (183 aa).

Belongs to the phycobilisome linker protein family. In terms of assembly, the phycobilisome is a hemidiscoidal structure that is composed of two distinct substructures: a core complex and a number of rods radiating from the core.

It localises to the plastid. The protein resides in the chloroplast. It is found in the chloroplast thylakoid membrane. Its function is as follows. Rod-core linker protein required for attachment of phycocyanin to allophycocyanin in cores of phycobilisomes. Linker polypeptides determine the state of aggregation and the location of the disk-shaped phycobiliprotein units within the phycobilisome and modulate their spectroscopic properties in order to mediate a directed and optimal energy transfer. This is Phycobilisome rod-core linker polypeptide cpcG (cpcG) from Aglaothamnion neglectum (Red alga).